We begin with the raw amino-acid sequence, 1241 residues long: MIENWPKKPEGSQWTDDQWKAVVANGRDILVAAAAGSGKTAVLVERIIKKIINEENPVDVDRLLVVTFTNAAAQEMKNRIGEALEKVLIDEPGSQHVRKQLSLLNKASISTIHSFCLQVIRGYYYMLDVDPRFRIANQTENELLKEEVLDDILEEEYGIEDNTIFFELVDRYTSDRSDDDLQRMILALHTESRAHPNPEKWLDKLVEAYDVEGKTIEDLVYASYLLEDVKFQLETAEQHIRKATELAMLPDGPAPRVETLQADVALLGTLSSAARESWTSVYEAMQNVSWQTLKRIKKSDYNEDVVKQVDSLRNKAKDEVKKLQEELFSRKPESFLRDFQDMHPVLEKLVQLVKVFTERFQAMKRDKGMVDFTDLEHFCLQILSEQSENGEMNPSAVAFQYRNKFTEVLVDEYQDTNFVQESIIKFVTKDSESEGNLFMVGDVKQSIYRFRLAEPGLFLGKYKRFTQEGLGGGMKIDLAKNFRSRHEVLAGTNFIFKQIMGEEVGEIDYDADAELKLGATYPEGEDVAAELLCIQQTEEEVIDGEEGAEVEKAQLEARLMAQRIKAMVDSGYEVYDRKTDSMRPVQYRDFVILLRSMPWAPQIMEELKLQGIPVYADLATGYFEATEVNIMMNVFRVIDNPMQDIPLAAVLRSPIVGLNDEDLATLRAHGKKGSFYEVMSSFLKGAPLEEEQELHEKLEWFYNLLQGWREFARQQSLSDLIWKVYGETGYYDFVGGLPAGKQRQANLRVLYDRARQYEATSFRGLFRFLRFIERILERGDDMGTARALGEQEDVVRIMTIHKSKGLEFPVVFVAGLGRRFNTQDLMKRFLLHKDFGFGSQFIDPRKRIKYTTLSQLAIKRKMKMELIAEEMRVLYVALTRAKEKLILIGTVKDANKEMEKWLDAREHSEWLLPDHIRAGASCYLDWIAPSLYRHRDSEMLLELGQGSIPDEIYGYDTNWKVEVVDGNTLLAPEPVQEEKQELLEALREKKAVPLQSERKEEVYDRLMWKYGYEDATSYRAKQSVTEIKRNYQSEEGSDNAFIKKLRTPIKTRPRFMEKKGLTYAERGTAVHAVMQHVDLKKPITVEVLQEQIAGMVNKELLTFEQAEEIAIEKVISFFDSDLGKRVLAAKSVEREVPFTMMLAAEEAYQDWQGKSEETILVQGVIDCMIEEEDGITLIDFKTDTIEGKFPGGFEQAKPILEDRYKVQLSLYAKALEKSLQHPVKEKCLYFFDGNHVVNIEE.

The region spanning 12 to 485 (SQWTDDQWKA…IDLAKNFRSR (474 aa)) is the UvrD-like helicase ATP-binding domain. An ATP-binding site is contributed by 33–40 (AAAGSGKT). The UvrD-like helicase C-terminal domain occupies 505-805 (GEIDYDADAE…RIMTIHKSKG (301 aa)).

It belongs to the helicase family. AddA subfamily. Heterodimer of AddA and AddB/RexB. Mg(2+) serves as cofactor.

It carries out the reaction Couples ATP hydrolysis with the unwinding of duplex DNA by translocating in the 3'-5' direction.. It catalyses the reaction ATP + H2O = ADP + phosphate + H(+). In terms of biological role, the heterodimer acts as both an ATP-dependent DNA helicase and an ATP-dependent, dual-direction single-stranded exonuclease. Recognizes the chi site generating a DNA molecule suitable for the initiation of homologous recombination. The AddA nuclease domain is required for chi fragment generation; this subunit has the helicase and 3' -&gt; 5' nuclease activities. In Bacillus cereus (strain G9842), this protein is ATP-dependent helicase/nuclease subunit A.